We begin with the raw amino-acid sequence, 163 residues long: Nucleotide-binding protein Cj0374 (163 aa).

Belongs to the YajQ family.

In terms of biological role, nucleotide-binding protein. The chain is Nucleotide-binding protein Cj0374 from Campylobacter jejuni subsp. jejuni serotype O:2 (strain ATCC 700819 / NCTC 11168).